The primary structure comprises 250 residues: uncharacterized protein (250 aa).

The a divalent metal cation site is built by Glu97, Glu99, and Asp128.

The protein belongs to the FAH family.

This is an uncharacterized protein from Archaeoglobus fulgidus (strain ATCC 49558 / DSM 4304 / JCM 9628 / NBRC 100126 / VC-16).